We begin with the raw amino-acid sequence, 162 residues long: MSVMYKKILYPTDFSETAEIALKHVKAFKTLKAEEVILLHVIDEREIKKRDIFSLLLGVAGLNKSVEEFENELKNKLTEEAKNKMENIKKELEDVGFKVKDIIVVGIPHEEIVKIAEDEGVDIIIMGSHGKTNLKEILLGSVTENVIKKSNKPVLVVKRKNS.

Residues Pro-11, Val-41, 127 to 133 (GSHGKTN), and 141 to 143 (SVT) contribute to the ATP site.

It belongs to the universal stress protein A family. As to quaternary structure, homodimer. The cofactor is Mn(2+).

The protein localises to the cytoplasm. The protein is Universal stress protein MJ0577 of Methanocaldococcus jannaschii (strain ATCC 43067 / DSM 2661 / JAL-1 / JCM 10045 / NBRC 100440) (Methanococcus jannaschii).